The primary structure comprises 113 residues: Hydrogenase maturation factor HypA (113 aa).

A Ni(2+)-binding site is contributed by His-2. Zn(2+) contacts are provided by Cys-73, Cys-76, Cys-89, and Cys-92.

The protein belongs to the HypA/HybF family.

Its function is as follows. Involved in the maturation of [NiFe] hydrogenases. Required for nickel insertion into the metal center of the hydrogenase. In Azotobacter vinelandii, this protein is Hydrogenase maturation factor HypA.